The chain runs to 319 residues: ATP-dependent 6-phosphofructokinase (319 aa).

Gly11 is a binding site for ATP. An ADP-binding site is contributed by 21-25 (RAVTR). ATP is bound by residues 72 to 73 (RF) and 102 to 105 (GDGS). Residue Asp103 coordinates Mg(2+). 125–127 (SID) lines the substrate pocket. The Proton acceptor role is filled by Asp127. ADP is bound at residue Arg154. Substrate contacts are provided by residues Arg162 and 169-171 (MGR). ADP contacts are provided by residues 185-187 (GAD) and 213-215 (KKH). Substrate is bound by residues Glu222, Arg243, and 249–252 (HMQR).

Belongs to the phosphofructokinase type A (PFKA) family. ATP-dependent PFK group I subfamily. Prokaryotic clade 'B1' sub-subfamily. Homotetramer. Mg(2+) is required as a cofactor.

It is found in the cytoplasm. It catalyses the reaction beta-D-fructose 6-phosphate + ATP = beta-D-fructose 1,6-bisphosphate + ADP + H(+). It participates in carbohydrate degradation; glycolysis; D-glyceraldehyde 3-phosphate and glycerone phosphate from D-glucose: step 3/4. With respect to regulation, allosterically activated by ADP and other diphosphonucleosides, and allosterically inhibited by phosphoenolpyruvate. Its function is as follows. Catalyzes the phosphorylation of D-fructose 6-phosphate to fructose 1,6-bisphosphate by ATP, the first committing step of glycolysis. The sequence is that of ATP-dependent 6-phosphofructokinase from Lactobacillus gasseri (strain ATCC 33323 / DSM 20243 / BCRC 14619 / CIP 102991 / JCM 1131 / KCTC 3163 / NCIMB 11718 / NCTC 13722 / AM63).